Reading from the N-terminus, the 636-residue chain is MAPPLLLLLLASGAAACPLPCVCQNLSESLSTLCAHRGLLFVPPNVDRRTVELRLADNFIQALGPPDFRNMTGLVDLTLSRNAITRIGARSFGDLESLRSLHLDGNRLVELGSSSLRGPVNLQHLILSGNQLGRIAPGAFDDFLDSLEDLDVSYNNLRQVPWAGIGSMPALHTLNLDHNLIDALPPGVFAQLSQLSRLDLTSNRLATLAPDPLFSRGRDAEASPSPLVLSFSGNPLHCNCELLWLRRLARPDDLETCASPPTLAGRYFWAVPEGEFSCEPPLIARHTQRLWVLEGQRATLRCRALGDPVPTMHWVGPDDRLVGNSSRAWAFPNGTLEIGVTGAGDAGAYTCIATNPAGEATARVELRVLALPHGGNTSAEGGRPGPSDIAASARTAAEGEGTLESEPAVQVTEVTATSGLVSWGLGRPADPVWMFQIQYNSSEDETLIYRIVPASSHHFLLKHLVPGADYDLCLLALSPAAGPSDLTATRLLGCAHFSTLPATPLCHALQAHVLGGTLTVAVGGVLVAALLVFTVALLVRGRGAGNGRLPLKLSHVQSQTNGGTSPMPKSHPPRSPPPRPQRSCSLDLGDTGGCYGYARRLGGAWARRSHSVHGGLLGAGCRGVGGSAERLEESVV.

A signal peptide spans 1–16 (MAPPLLLLLLASGAAA). The LRRNT domain maps to 17-48 (CPLPCVCQNLSESLSTLCAHRGLLFVPPNVDR). At 17–518 (CPLPCVCQNL…LQAHVLGGTL (502 aa)) the chain is on the extracellular side. Residues Asn-25 and Asn-70 are each glycosylated (N-linked (GlcNAc...) asparagine). LRR repeat units lie at residues 49 to 70 (RTVE…DFRN), 73 to 94 (GLVD…SFGD), 97 to 118 (SLRS…SLRG), 121 to 142 (NLQH…AFDD), 146 to 169 (SLED…GSMP), 170 to 191 (ALHT…VFAQ), and 194 to 215 (QLSR…PLFS). The 47-residue stretch at 234–280 (NPLHCNCELLWLRRLARPDDLETCASPPTLAGRYFWAVPEGEFSCEP) folds into the LRRCT domain. Residues 281–367 (PLIARHTQRL…GEATARVELR (87 aa)) form the Ig-like domain. The cysteines at positions 302 and 351 are disulfide-linked. Asn-324, Asn-333, Asn-376, and Asn-440 each carry an N-linked (GlcNAc...) asparagine glycan. One can recognise a Fibronectin type-III domain in the interval 405–502 (SEPAVQVTEV…GCAHFSTLPA (98 aa)). Residues 519–539 (TVAVGGVLVAALLVFTVALLV) traverse the membrane as a helical segment. Topologically, residues 540 to 636 (RGRGAGNGRL…SAERLEESVV (97 aa)) are cytoplasmic. The interval 556–585 (VQSQTNGGTSPMPKSHPPRSPPPRPQRSCS) is disordered. A compositionally biased stretch (pro residues) spans 569-580 (KSHPPRSPPPRP). Residues Ser-585 and Ser-627 each carry the phosphoserine modification. The short motif at 633-636 (ESVV) is the PDZ-binding element.

The protein belongs to the LRFN family. In terms of assembly, can form heteromeric complexes with LRFN1, LRFN2, LRFN3 and LRFN5. Unable to form homophilic interactions across cell junctions. Interacts with DLG1, DLG2 and DLG3. Also interacts with DLG4. Post-translationally, glycosylated. Expressed in brain and testis. In the brain, weak, but broad expression in the cerebral cortex and diencephalic nuclei. Also detected in other parts of the central nervous system, including the olfactory bulb, pons, cerebellum, and medulla oblongata, as well as in the peripheral nervous system, such as the ganglia of cranial nerves and the dorsal root ganglion during gestation.

The protein resides in the membrane. Promotes neurite outgrowth in hippocampal neurons. May play a role in redistributing DLG4 to the cell periphery. This is Leucine-rich repeat and fibronectin type-III domain-containing protein 4 (Lrfn4) from Mus musculus (Mouse).